The sequence spans 189 residues: HGPRTase-like protein 2 (189 aa).

Belongs to the purine/pyrimidine phosphoribosyltransferase family. Archaeal HPRT subfamily.

In terms of biological role, may catalyze a purine salvage reaction, the substrate is unknown. This chain is HGPRTase-like protein 2, found in Haloarcula marismortui (strain ATCC 43049 / DSM 3752 / JCM 8966 / VKM B-1809) (Halobacterium marismortui).